Here is a 359-residue protein sequence, read N- to C-terminus: Histidinol-phosphate aminotransferase (359 aa).

Lys-217 bears the N6-(pyridoxal phosphate)lysine mark.

The protein belongs to the class-II pyridoxal-phosphate-dependent aminotransferase family. Histidinol-phosphate aminotransferase subfamily. In terms of assembly, homodimer. The cofactor is pyridoxal 5'-phosphate.

The catalysed reaction is L-histidinol phosphate + 2-oxoglutarate = 3-(imidazol-4-yl)-2-oxopropyl phosphate + L-glutamate. The protein operates within amino-acid biosynthesis; L-histidine biosynthesis; L-histidine from 5-phospho-alpha-D-ribose 1-diphosphate: step 7/9. The sequence is that of Histidinol-phosphate aminotransferase from Citrobacter koseri (strain ATCC BAA-895 / CDC 4225-83 / SGSC4696).